Consider the following 447-residue polypeptide: Phosphatidylinositol 4-kinase type 2-alpha (447 aa).

The disordered stretch occupies residues 1-77; the sequence is MDETSPLVSP…HRNEFPEDPE (77 aa). Residues 48 to 77 show a composition bias toward basic and acidic residues; it reads RSRERQPLLDRDRGASPRDPHRNEFPEDPE. Residues 92-421 form the PI3K/PI4K catalytic domain; sequence GIYPERIYQG…VQMPPVIVET (330 aa). A G-loop region spans residues 98–104; that stretch reads IYQGSSG. ATP contacts are provided by residues 99-105 and Lys120; that span reads YQGSSGS. Residues 125-127 are important for substrate binding; the sequence is EPY. Residues 133–146 are important for interaction with membranes; sequence KWTKWLQKLCCPCC. 4 S-palmitoyl cysteine lipidation sites follow: Cys142, Cys143, Cys145, and Cys146. Residue 229-232 participates in ATP binding; that stretch reads QIFV. The interval 236–244 is important for interaction with membranes; it reads KDADFWLRR. Positions 273–281 are catalytic loop; that stretch reads RNTDRGNDN. Residues 312-332 form an activation loop region; the sequence is AIDNGLAFPLKHPDSWRAYPF. Asp314 is a binding site for ATP. Residues 327-336 are important for interaction with membranes; that stretch reads WRAYPFYWAW.

This sequence belongs to the PI3/PI4-kinase family. Type II PI4K subfamily.

The protein resides in the golgi apparatus. It localises to the trans-Golgi network membrane. It is found in the membrane raft. Its subcellular location is the endosome. The protein localises to the cytoplasmic vesicle. The protein resides in the cell projection. It localises to the dendrite. It is found in the presynaptic cell membrane. Its subcellular location is the synapse. The protein localises to the synaptosome. The protein resides in the mitochondrion. It localises to the membrane. It is found in the cell membrane. Its subcellular location is the perikaryon. The protein localises to the neuron projection. It carries out the reaction a 1,2-diacyl-sn-glycero-3-phospho-(1D-myo-inositol) + ATP = a 1,2-diacyl-sn-glycero-3-phospho-(1D-myo-inositol 4-phosphate) + ADP + H(+). Functionally, membrane-bound phosphatidylinositol-4 kinase (PI4-kinase) that catalyzes the phosphorylation of phosphatidylinositol (PI) to phosphatidylinositol 4-phosphate (PI4P), a lipid that plays important roles in endocytosis, Golgi function, protein sorting and membrane trafficking. Besides, phosphorylation of phosphatidylinositol (PI) to phosphatidylinositol 4-phosphate (PI4P) is the first committed step in the generation of phosphatidylinositol 4,5-bisphosphate (PIP2), a precursor of the second messenger inositol 1,4,5-trisphosphate (InsP3). The chain is Phosphatidylinositol 4-kinase type 2-alpha (pi4k2a) from Danio rerio (Zebrafish).